We begin with the raw amino-acid sequence, 144 residues long: Galectin b (144 aa).

The 138-residue stretch at 1-138 folds into the Galectin domain; sequence DHIDLEFDVG…DAVLRKLCVV (138 aa).

Lectin that binds beta-galactoside and a wide array of complex carbohydrates. The polypeptide is Galectin b (Aplysina lactuca (Marine sponge)).